The sequence spans 335 residues: NmrA-like family domain-containing oxidoreductase ptmS (335 aa).

Residues 12-17 (GATGNQ), 39-43 (RDPNS), 60-61 (DG), 81-88 (INSDDPVF), Lys-139, and 163-166 (FLEN) each bind NADP(+). Positions 161-206 (GYFLENFLFKQGAFIMGGFPWETDAEGYLTWKVPYWGGEEQIPFLS) are interaction with ASS1.

This sequence belongs to the NmrA-type oxidoreductase family.

It participates in secondary metabolite biosynthesis. Its function is as follows. NmrA-like family domain-containing oxidoreductase; part of the gene cluster that mediates the biosynthesis of the indole diterpenes penitrems. The geranylgeranyl diphosphate (GGPP) synthase ptmG catalyzes the first step in penitrem biosynthesis via conversion of farnesyl pyrophosphate and isopentyl pyrophosphate into geranylgeranyl pyrophosphate (GGPP). Condensation of indole-3-glycerol phosphate with GGPP by the prenyl transferase ptmC then forms 3-geranylgeranylindole (3-GGI). Epoxidation by the FAD-dependent monooxygenase ptmM leads to a epoxidized-GGI that is substrate of the terpene cyclase ptmB for cyclization to yield paspaline. Paspaline is subsequently converted to 13-desoxypaxilline by the cytochrome P450 monooxygenase ptmP, the latter being then converted to paxilline by the cytochrome P450 monooxygenase ptmQ. Paxilline is converted to beta-paxitriol via C-10 ketoreduction by the short-chain dehydrogenase ptmH which can be monoprenylated at the C-20 by the indole diterpene prenyltransferase ptmD. A two-step elimination (acetylation and elimination) process performed by the O-acetyltransferase ptmV and ptmI leads to the production of the prenylated form of penijanthine. The FAD-linked oxidoreductase ptmO then converts the prenylated form of penijanthine into PC-M5 which is in turn transformed into PC-M4 by the aromatic dimethylallyltransferase ptmE. Five sequential oxidative transformations performed by the cytochrome P450 monooxygenases ptmK, ptmU, ptmL, ptmN and ptmJ yield the various penitrem compounds. PtmK, ptmU and ptmM are involved in the formation of the key bicyclic ring of penitrem C via the formation of the intermediates secopenitrem D and penitrem D. PtmL catalyzes the epoxidation of penitrem D and C to yield penitrem B and F, respectively. PtmJ catalyzes the last benzylic hydroxylation to convert penitrem B to prenitrem E and penitrem F to penitrem A. This is NmrA-like family domain-containing oxidoreductase ptmS from Penicillium ochrochloron.